Consider the following 381-residue polypeptide: Cell division protein FtsZ (381 aa).

A disordered region spans residues 1 to 25 (MKFINDAIKESEKREKPSSSSMNSE). Over residues 7-17 (AIKESEKREKP) the composition is skewed to basic and acidic residues. GTP contacts are provided by residues 48–52 (GAGNN), 135–137 (GTG), Glu-166, Arg-170, and Asp-213.

This sequence belongs to the FtsZ family. As to quaternary structure, homodimer. Polymerizes to form a dynamic ring structure in a strictly GTP-dependent manner. Interacts directly with several other division proteins.

It localises to the cytoplasm. Functionally, essential cell division protein that forms a contractile ring structure (Z ring) at the future cell division site. The regulation of the ring assembly controls the timing and the location of cell division. One of the functions of the FtsZ ring is to recruit other cell division proteins to the septum to produce a new cell wall between the dividing cells. Binds GTP and shows GTPase activity. The chain is Cell division protein FtsZ from Methanothermobacter thermautotrophicus (strain ATCC 29096 / DSM 1053 / JCM 10044 / NBRC 100330 / Delta H) (Methanobacterium thermoautotrophicum).